The primary structure comprises 490 residues: MKYSVKQTALEQENKSLFIAIFENQELSPAALKLDLKLKGEITEAVKNGEVSGKIGRILVLRHGAQRIILVGCGKQNEVTERQYKQIIQKAVKTAKETIATTIINALTEVKIKDRDLYWNVRFAVETIEEDNYIFEQFKSKKSENNSKLAEIIFYTEENHEQAELAIRHATAISSGVKAAKDIANCPPNICNPAYLAEQANQLAGRSSLIETTVIGEKEMRKLGMNAYLAVSCGSKNEAKLSVMEYRNHENPNAKPIVLAGKGLTFDAGGISLKPAADMDEMKYDMCGAASVYGVMNAIAELQLPLNVIGVMAGCENLPDGNAYRPGDILTTMSGLTVEVLNTDAEGRLVLCDTLTYVERFEPELVIDVATLTGACVVALGQHNSGLVSTDDNLAQDLERAAKLANDKAWRLPLSEEYQEQLKSKFADLANLGGRWGGAITAGAFLSNFTKNYPWAHLDIAGTAWLQGQNKGATGRPVSLLVQFLLNQVK.

Lys262 and Asp267 together coordinate Mn(2+). The active site involves Lys274. The Mn(2+) site is built by Asp285, Asp344, and Glu346. Residue Arg348 is part of the active site.

Belongs to the peptidase M17 family. Mn(2+) is required as a cofactor.

The protein resides in the cytoplasm. The enzyme catalyses Release of an N-terminal amino acid, Xaa-|-Yaa-, in which Xaa is preferably Leu, but may be other amino acids including Pro although not Arg or Lys, and Yaa may be Pro. Amino acid amides and methyl esters are also readily hydrolyzed, but rates on arylamides are exceedingly low.. It catalyses the reaction Release of an N-terminal amino acid, preferentially leucine, but not glutamic or aspartic acids.. Functionally, presumably involved in the processing and regular turnover of intracellular proteins. Catalyzes the removal of unsubstituted N-terminal amino acids from various peptides. The polypeptide is Probable cytosol aminopeptidase (Mannheimia succiniciproducens (strain KCTC 0769BP / MBEL55E)).